Here is a 260-residue protein sequence, read N- to C-terminus: Adenosylcobinamide-GDP ribazoletransferase (260 aa).

Helical transmembrane passes span 31–51 (FYFL…PIYF), 57–77 (IEIS…SIHL), 108–128 (YGTI…STII), 131–151 (AGLL…VVVF), 173–193 (FFFW…IAAF), 206–226 (LKYL…IRIS), and 240–260 (LIVE…NVHL).

The protein belongs to the CobS family. Mg(2+) serves as cofactor.

It is found in the cell inner membrane. The catalysed reaction is alpha-ribazole + adenosylcob(III)inamide-GDP = adenosylcob(III)alamin + GMP + H(+). It carries out the reaction alpha-ribazole 5'-phosphate + adenosylcob(III)inamide-GDP = adenosylcob(III)alamin 5'-phosphate + GMP + H(+). The protein operates within cofactor biosynthesis; adenosylcobalamin biosynthesis; adenosylcobalamin from cob(II)yrinate a,c-diamide: step 7/7. Its function is as follows. Joins adenosylcobinamide-GDP and alpha-ribazole to generate adenosylcobalamin (Ado-cobalamin). Also synthesizes adenosylcobalamin 5'-phosphate from adenosylcobinamide-GDP and alpha-ribazole 5'-phosphate. The polypeptide is Adenosylcobinamide-GDP ribazoletransferase (Treponema denticola (strain ATCC 35405 / DSM 14222 / CIP 103919 / JCM 8153 / KCTC 15104)).